The primary structure comprises 161 residues: Phosphopantetheine adenylyltransferase (161 aa).

T9 contributes to the substrate binding site. ATP-binding positions include 9-10 and H17; that span reads TF. 3 residues coordinate substrate: K41, L73, and R87. ATP contacts are provided by residues 88–90, E98, and 123–129; these read GLR and YQFISGT.

Belongs to the bacterial CoaD family. As to quaternary structure, homohexamer. Mg(2+) serves as cofactor.

The protein localises to the cytoplasm. It carries out the reaction (R)-4'-phosphopantetheine + ATP + H(+) = 3'-dephospho-CoA + diphosphate. It functions in the pathway cofactor biosynthesis; coenzyme A biosynthesis; CoA from (R)-pantothenate: step 4/5. Reversibly transfers an adenylyl group from ATP to 4'-phosphopantetheine, yielding dephospho-CoA (dPCoA) and pyrophosphate. The chain is Phosphopantetheine adenylyltransferase from Cupriavidus metallidurans (strain ATCC 43123 / DSM 2839 / NBRC 102507 / CH34) (Ralstonia metallidurans).